The sequence spans 194 residues: Large ribosomal subunit protein bL9 (194 aa).

Residues 165-194 (PEDAEEAVANEEEAEAALLDDEDADEYEQG) form a disordered region. Acidic residues predominate over residues 166 to 194 (EDAEEAVANEEEAEAALLDDEDADEYEQG).

Belongs to the bacterial ribosomal protein bL9 family.

In terms of biological role, binds to the 23S rRNA. The chain is Large ribosomal subunit protein bL9 from Rhodospirillum rubrum (strain ATCC 11170 / ATH 1.1.1 / DSM 467 / LMG 4362 / NCIMB 8255 / S1).